The following is a 283-amino-acid chain: Pantothenate synthetase (283 aa).

30 to 37 is an ATP binding site; it reads MGALHEGH. H37 (proton donor) is an active-site residue. Q61 lines the (R)-pantoate pocket. Q61 provides a ligand contact to beta-alanine. Residue 149–152 coordinates ATP; sequence GEKD. Q155 is a binding site for (R)-pantoate. Residues L178 and 186–189 contribute to the ATP site; that span reads RSSR.

Belongs to the pantothenate synthetase family. In terms of assembly, homodimer.

It localises to the cytoplasm. The catalysed reaction is (R)-pantoate + beta-alanine + ATP = (R)-pantothenate + AMP + diphosphate + H(+). It participates in cofactor biosynthesis; (R)-pantothenate biosynthesis; (R)-pantothenate from (R)-pantoate and beta-alanine: step 1/1. Its function is as follows. Catalyzes the condensation of pantoate with beta-alanine in an ATP-dependent reaction via a pantoyl-adenylate intermediate. The polypeptide is Pantothenate synthetase (Christiangramia forsetii (strain DSM 17595 / CGMCC 1.15422 / KT0803) (Gramella forsetii)).